The primary structure comprises 121 residues: Large ribosomal subunit protein uL18 (121 aa).

Belongs to the universal ribosomal protein uL18 family. As to quaternary structure, part of the 50S ribosomal subunit; part of the 5S rRNA/L5/L18/L25 subcomplex. Contacts the 5S and 23S rRNAs.

In terms of biological role, this is one of the proteins that bind and probably mediate the attachment of the 5S RNA into the large ribosomal subunit, where it forms part of the central protuberance. This chain is Large ribosomal subunit protein uL18, found in Buchnera aphidicola subsp. Baizongia pistaciae (strain Bp).